The following is a 381-amino-acid chain: Heterogeneous nuclear rnp K-like protein 2 (381 aa).

A disordered region spans residues 1–34 (MSQFFEAATPVAIPTNNTNGGSSDAGSAATGGAP). The span at 15-33 (TNNTNGGSSDAGSAATGGA) shows a compositional bias: low complexity. 3 KH domains span residues 43–107 (TINH…IGDI), 156–221 (IGYV…LIEI), and 258–326 (NTRI…ESML). The tract at residues 344–381 (LEAAEGDATVVTERSDSASFLEEKEEPQENHDNKEEQS) is disordered. Phosphoserine is present on residues S358, S360, and S362. The segment covering 370 to 381 (PQENHDNKEEQS) has biased composition (basic and acidic residues).

The protein belongs to the HEK2 family. In terms of assembly, binds RNA. Post-translationally, phosphorylated by the plasma membrane-Anchored casein kinase YCK1. Phosphorylation at its C-terminus reduces its RNA-binding capacity.

It localises to the cytoplasm. Its subcellular location is the P-body. It is found in the nucleus. The protein localises to the chromosome. The protein resides in the telomere. RNA-binding protein involved in the correct localization of transcripts in the cell. RNA localization is a widespread mechanism for achieving localized protein synthesis. Required for the asymmetric localization to the daughter cell nucleus of the ASH1 transcript, coding for a specific repressor of transcription. Overexpression inhibits translation of the ASH1 transcript. Involved in the stability of transcripts, like the MTL1 mRNA. Involved in structural and functional organization of telomeric chromatin and regulates silencing at the HMR locus. This chain is Heterogeneous nuclear rnp K-like protein 2 (HEK2), found in Saccharomyces cerevisiae (strain YJM789) (Baker's yeast).